We begin with the raw amino-acid sequence, 554 residues long: Glucose-6-phosphate isomerase (554 aa).

Glu-358 functions as the Proton donor in the catalytic mechanism. Active-site residues include His-389 and Lys-515. The span at 527–540 (ANNSPAPQSDSSTD) shows a compositional bias: polar residues. The tract at residues 527-554 (ANNSPAPQSDSSTDALVRRYRSERGRTS) is disordered. Residues 542–554 (LVRRYRSERGRTS) show a composition bias toward basic and acidic residues.

It belongs to the GPI family.

The protein resides in the cytoplasm. The enzyme catalyses alpha-D-glucose 6-phosphate = beta-D-fructose 6-phosphate. The protein operates within carbohydrate biosynthesis; gluconeogenesis. It functions in the pathway carbohydrate degradation; glycolysis; D-glyceraldehyde 3-phosphate and glycerone phosphate from D-glucose: step 2/4. Its function is as follows. Catalyzes the reversible isomerization of glucose-6-phosphate to fructose-6-phosphate. This Mycolicibacterium paratuberculosis (strain ATCC BAA-968 / K-10) (Mycobacterium paratuberculosis) protein is Glucose-6-phosphate isomerase.